Here is a 325-residue protein sequence, read N- to C-terminus: Putative gluconeogenesis factor (325 aa).

The protein belongs to the gluconeogenesis factor family.

It localises to the cytoplasm. Functionally, required for morphogenesis under gluconeogenic growth conditions. The sequence is that of Putative gluconeogenesis factor from Streptococcus pyogenes serotype M3 (strain ATCC BAA-595 / MGAS315).